The sequence spans 253 residues: Imidazole glycerol phosphate synthase subunit HisF (253 aa).

Residues aspartate 11 and aspartate 130 contribute to the active site.

This sequence belongs to the HisA/HisF family. Heterodimer of HisH and HisF.

The protein resides in the cytoplasm. The catalysed reaction is 5-[(5-phospho-1-deoxy-D-ribulos-1-ylimino)methylamino]-1-(5-phospho-beta-D-ribosyl)imidazole-4-carboxamide + L-glutamine = D-erythro-1-(imidazol-4-yl)glycerol 3-phosphate + 5-amino-1-(5-phospho-beta-D-ribosyl)imidazole-4-carboxamide + L-glutamate + H(+). Its pathway is amino-acid biosynthesis; L-histidine biosynthesis; L-histidine from 5-phospho-alpha-D-ribose 1-diphosphate: step 5/9. IGPS catalyzes the conversion of PRFAR and glutamine to IGP, AICAR and glutamate. The HisF subunit catalyzes the cyclization activity that produces IGP and AICAR from PRFAR using the ammonia provided by the HisH subunit. In Dinoroseobacter shibae (strain DSM 16493 / NCIMB 14021 / DFL 12), this protein is Imidazole glycerol phosphate synthase subunit HisF.